Here is an 876-residue protein sequence, read N- to C-terminus: Valine--tRNA ligase (876 aa).

A 'HIGH' region motif is present at residues 43 to 53; it reads PNVTGVLHMGH. The 'KMSKS' region signature appears at 534–538; that stretch reads KMSKS. K537 contributes to the ATP binding site. Residues 847-876 are a coiled coil; it reads PEKVVAIEKAKKADAEAKIEALKASLKSLS.

It belongs to the class-I aminoacyl-tRNA synthetase family. ValS type 1 subfamily. Monomer.

It localises to the cytoplasm. It carries out the reaction tRNA(Val) + L-valine + ATP = L-valyl-tRNA(Val) + AMP + diphosphate. In terms of biological role, catalyzes the attachment of valine to tRNA(Val). As ValRS can inadvertently accommodate and process structurally similar amino acids such as threonine, to avoid such errors, it has a 'posttransfer' editing activity that hydrolyzes mischarged Thr-tRNA(Val) in a tRNA-dependent manner. The sequence is that of Valine--tRNA ligase from Christiangramia forsetii (strain DSM 17595 / CGMCC 1.15422 / KT0803) (Gramella forsetii).